The primary structure comprises 348 residues: Anthranilate phosphoribosyltransferase (348 aa).

5-phospho-alpha-D-ribose 1-diphosphate is bound by residues Gly-81, 84–85, 91–94, 109–117, and Ser-121; these read GD, NVST, and KHGNRAVSG. Gly-81 lines the anthranilate pocket. Position 93 (Ser-93) interacts with Mg(2+). Asn-112 serves as a coordination point for anthranilate. Residue Arg-167 coordinates anthranilate. The Mg(2+) site is built by Asp-226 and Glu-227.

Belongs to the anthranilate phosphoribosyltransferase family. Homodimer. It depends on Mg(2+) as a cofactor.

It carries out the reaction N-(5-phospho-beta-D-ribosyl)anthranilate + diphosphate = 5-phospho-alpha-D-ribose 1-diphosphate + anthranilate. The protein operates within amino-acid biosynthesis; L-tryptophan biosynthesis; L-tryptophan from chorismate: step 2/5. Functionally, catalyzes the transfer of the phosphoribosyl group of 5-phosphorylribose-1-pyrophosphate (PRPP) to anthranilate to yield N-(5'-phosphoribosyl)-anthranilate (PRA). This Azotobacter vinelandii (strain DJ / ATCC BAA-1303) protein is Anthranilate phosphoribosyltransferase.